The following is a 744-amino-acid chain: 6-phosphofructo-2-kinase/fructose-2,6-bisphosphatase (744 aa).

Disordered regions lie at residues 1-23 (MGSG…GGQL) and 213-245 (RSLS…DGSP). Gly-2 is lipidated: N-myristoyl glycine. The CBM20 domain occupies 17–122 (NGGGGQLYVS…GDARLALFRL (106 aa)). Residues 213-232 (RSLSASGSFRNDSTPKAAQR) are compositionally biased toward polar residues. A Phosphoserine; by CPK3 modification is found at Ser-220. Residues Ser-276 and Ser-295 each carry the phosphoserine modification. Residues 301-549 (SLSASSFLID…VFFLVNTHLT (249 aa)) are 6-phosphofructo-2-kinase. Ser-303 bears the Phosphoserine; by CPK3 mark. 349–357 (GLPARGKTF) contributes to the ATP binding site. The beta-D-fructose 6-phosphate site is built by Arg-382 and Arg-406. The active site involves Asp-431. Positions 433 and 439 each coordinate beta-D-fructose 6-phosphate. The active site involves Cys-460. An ATP-binding site is contributed by 469–474 (NIRLKI). Arg-496 and Tyr-500 together coordinate beta-D-fructose 6-phosphate. The fructose-2,6-bisphosphatase stretch occupies residues 550-744 (PRPILLTRHG…VQEKRYKLMD (195 aa)). Position 557 (Arg-557) interacts with beta-D-fructose 2,6-bisphosphate. His-558 functions as the Tele-phosphohistidine intermediate in the catalytic mechanism. Beta-D-fructose 2,6-bisphosphate contacts are provided by Asn-564 and Gly-570. The Proton donor/acceptor role is filled by Glu-630. Positions 641, 655, 659, 670, 697, and 701 each coordinate beta-D-fructose 2,6-bisphosphate. An ATP-binding site is contributed by 652–655 (YESR). 697 to 701 (QAVLR) contributes to the ATP binding site.

It in the C-terminal section; belongs to the phosphoglycerate mutase family. Interacts with 14-3-3 proteins; these interactions may regulate both nitrate assimilation and sucrose/starch partitioning in leaves during the diurnal cycle. Phosphorylation at Ser-220 and Ser-303 by CPK3 promotes 14-3-3 proteins binding.

It localises to the membrane. It is found in the cytoplasm. The catalysed reaction is beta-D-fructose 2,6-bisphosphate + H2O = beta-D-fructose 6-phosphate + phosphate. The enzyme catalyses beta-D-fructose 6-phosphate + ATP = beta-D-fructose 2,6-bisphosphate + ADP + H(+). With respect to regulation, 6-phosphofructo-2-kinase activity is activated by pyruvate. 6-phosphofructo-2-kinase activity is inhibited by PPi, phosphoenolpyruvate and 2-phosphoglycerate. Fructose-2,6-bisphosphatase activity is inhibited by pyruvate, fructose 1,6-bisphosphate and 6-phosphogluconate. Synthesis and degradation of fructose 2,6-bisphosphate. Regulates carbon partitioning between sucrose versus starch during the diurnal cycle. The chain is 6-phosphofructo-2-kinase/fructose-2,6-bisphosphatase (FKFBP) from Arabidopsis thaliana (Mouse-ear cress).